The primary structure comprises 513 residues: GMP synthase [glutamine-hydrolyzing] (513 aa).

Positions methionine 8 to glutamate 198 constitute a Glutamine amidotransferase type-1 domain. Cysteine 85 (nucleophile) is an active-site residue. Residues histidine 172 and glutamate 174 contribute to the active site. One can recognise a GMPS ATP-PPase domain in the interval tryptophan 199–arginine 388. Glycine 227–valine 233 serves as a coordination point for ATP.

In terms of assembly, homodimer.

It carries out the reaction XMP + L-glutamine + ATP + H2O = GMP + L-glutamate + AMP + diphosphate + 2 H(+). Its pathway is purine metabolism; GMP biosynthesis; GMP from XMP (L-Gln route): step 1/1. Functionally, catalyzes the synthesis of GMP from XMP. This chain is GMP synthase [glutamine-hydrolyzing] (guaA), found in Bacillus subtilis (strain 168).